The chain runs to 279 residues: Protease HtpX homolog (279 aa).

Transmembrane regions (helical) follow at residues 6-26 and 29-49; these read VFVL…ALGG and GAIL…WGSS. Histidine 130 provides a ligand contact to Zn(2+). The active site involves glutamate 131. Position 134 (histidine 134) interacts with Zn(2+). Transmembrane regions (helical) follow at residues 145 to 165 and 176 to 196; these read IAAT…FFGG and VAGI…QFAI. Residue glutamate 201 participates in Zn(2+) binding.

The protein belongs to the peptidase M48B family. Zn(2+) serves as cofactor.

Its subcellular location is the cell inner membrane. This is Protease HtpX homolog from Gemmatimonas aurantiaca (strain DSM 14586 / JCM 11422 / NBRC 100505 / T-27).